A 130-amino-acid chain; its full sequence is Small ribosomal subunit protein uS8 (130 aa).

This sequence belongs to the universal ribosomal protein uS8 family. Part of the 30S ribosomal subunit.

In terms of biological role, one of the primary rRNA binding proteins, it binds directly to 16S rRNA central domain where it helps coordinate assembly of the platform of the 30S subunit. This chain is Small ribosomal subunit protein uS8, found in Methanococcus maripaludis (strain C7 / ATCC BAA-1331).